The chain runs to 359 residues: Protein Wnt-5b (359 aa).

Positions M1 to A17 are cleaved as a signal peptide. An intrachain disulfide couples C83 to C94. 2 N-linked (GlcNAc...) asparagine glycosylation sites follow: N93 and N99. 10 cysteine pairs are disulfide-bonded: C133–C141, C143–C161, C217–C231, C219–C226, C288–C319, C304–C314, C318–C358, C334–C349, C336–C346, and C341–C342. Residue S223 is the site of O-palmitoleoyl serine; by PORCN attachment. 2 N-linked (GlcNAc...) asparagine glycosylation sites follow: N291 and N305.

It belongs to the Wnt family. As to quaternary structure, interacts with PORCN. Post-translationally, palmitoleoylation is required for efficient binding to frizzled receptors. Depalmitoleoylation leads to Wnt signaling pathway inhibition.

The protein resides in the secreted. It is found in the extracellular space. It localises to the extracellular matrix. Ligand for members of the frizzled family of seven transmembrane receptors. Probable developmental protein. May be a signaling molecule which affects the development of discrete regions of tissues. Is likely to signal over only few cell diameters. The protein is Protein Wnt-5b (WNT5B) of Pongo abelii (Sumatran orangutan).